The following is a 274-amino-acid chain: MKNTFVYQAEKPVIKLLQITDPHLFKDESAELLGVNTQASFAQVLKEIQQENNEFDVILATGDLVQDSSDEGYIRFVEMMKPFNKPVFWIPGNHDFQPKMAEFLNQPPMNAAKHLLLGEHWQALLLDSQVYGVPHGQLSQHQLDLLKETLGKNPERYTLVVLHHHLLPTNSAWLDQHNLRNSHELAEVLAPFTNVKAILYGHIHQEVNSEWNGYQVMATPATCIQFKPDCQYFSLDTLQPGWREIELHSDGSIRTEVKRIQQAEFFPNMQEEGY.

Fe cation is bound by residues aspartate 21, histidine 23, aspartate 63, asparagine 93, histidine 163, histidine 202, and histidine 204. AMP is bound by residues histidine 23, aspartate 63, and 93–94 (NH). Histidine 204 contacts AMP.

This sequence belongs to the cyclic nucleotide phosphodiesterase class-III family. It depends on Fe(2+) as a cofactor.

The catalysed reaction is 3',5'-cyclic AMP + H2O = AMP + H(+). Hydrolyzes cAMP to 5'-AMP. Plays an important regulatory role in modulating the intracellular concentration of cAMP, thereby influencing cAMP-dependent processes. May coordinate responses to nutritional stress, ensuring optimal competence development. This chain is 3',5'-cyclic adenosine monophosphate phosphodiesterase CpdA, found in Haemophilus influenzae (strain ATCC 51907 / DSM 11121 / KW20 / Rd).